We begin with the raw amino-acid sequence, 328 residues long: Arabinose 5-phosphate isomerase KdsD (328 aa).

The region spanning Ala-41–Phe-184 is the SIS domain. Residues Gly-75–Thr-76, His-82, His-88, Ala-114–His-123, and Lys-148–Pro-150 each bind substrate. His-82 provides a ligand contact to Zn(2+). Residues Met-210–Met-268 form the CBS 1 domain. A substrate-binding site is contributed by Glu-275. The CBS 2 domain occupies Met-277–Val-328.

Belongs to the SIS family. GutQ/KpsF subfamily. In terms of assembly, homotetramer.

It catalyses the reaction D-arabinose 5-phosphate = D-ribulose 5-phosphate. The protein operates within carbohydrate biosynthesis; 3-deoxy-D-manno-octulosonate biosynthesis; 3-deoxy-D-manno-octulosonate from D-ribulose 5-phosphate: step 1/3. It participates in bacterial outer membrane biogenesis; lipopolysaccharide biosynthesis. Involved in the biosynthesis of 3-deoxy-D-manno-octulosonate (KDO), a unique 8-carbon sugar component of lipopolysaccharides (LPSs). Catalyzes the reversible aldol-ketol isomerization between D-ribulose 5-phosphate (Ru5P) and D-arabinose 5-phosphate (A5P). In Salmonella typhi, this protein is Arabinose 5-phosphate isomerase KdsD (kdsD).